A 607-amino-acid chain; its full sequence is UvrABC system protein C (607 aa).

The region spanning 15 to 94 (ENPGVYLMKN…IKRHRPYFNV (80 aa)) is the GIY-YIG domain. The 36-residue stretch at 204-239 (DQVLKLLIRLMNEASARLDYETAALRRDQIASIKEV) folds into the UVR domain.

This sequence belongs to the UvrC family. In terms of assembly, interacts with UvrB in an incision complex.

Its subcellular location is the cytoplasm. In terms of biological role, the UvrABC repair system catalyzes the recognition and processing of DNA lesions. UvrC both incises the 5' and 3' sides of the lesion. The N-terminal half is responsible for the 3' incision and the C-terminal half is responsible for the 5' incision. This chain is UvrABC system protein C, found in Dehalococcoides mccartyi (strain ATCC BAA-2100 / JCM 16839 / KCTC 5957 / BAV1).